Here is a 239-residue protein sequence, read N- to C-terminus: IkB-like protein (239 aa).

ANK repeat units lie at residues 48 to 80 (SKIT…EIIS), 87 to 118 (DGNS…GIKV), 124 to 153 (NGIT…NPNQ), and 158 to 187 (KGFN…KPLF). Residues 81 to 87 (HYRRDKD) carry the Nuclear localization signal motif. Positions 203–214 (KKKPKIIITSCE) match the Nuclear localization signal motif. A PxIxITxC motif; Interaction with host PPP3CA motif is present at residues 206-213 (PKIIITSC). An FLCV motif motif is present at residues 228 to 231 (FLCV).

It belongs to the asfivirus A238L family. Interacts with host PPIA. Interacts with host PPP3CA/Calcineurin. Interacts with host RELA/p65; interaction of the 32 kDa form with host RELA results in the formation of a stable complex with NF-kappa-B. Interacts with host PPP3R1. Interacts with host EP300; this interaction inhibits the association of host EP300 with host RELA, JUN and NFATC2. The protein exists in a 28 kDa and a 32 kDa form, probably due to post-translational modifications which are neither phosphorylation, nor sumoylation.

Its subcellular location is the host nucleus. The protein localises to the host cytoplasm. In terms of biological role, ikB-like protein that inhibits the binding of NF-kappa-B to DNA, thereby downregulating pro-inflammatory cytokine production. Forms a heterodimer with the NF-kappa-B subunit RELA/p65 and prevents the activation of the NF-kappa-B transcription factor. Inhibits calcineurin function, which is required for the induction of nuclear factor of activated T cells (NFAT)-dependent immune response genes. Prevents the binding of substrates to calcineurin without affecting the phosphatase activity. Does not contain the serine residues that are phosphorylated by host IkB kinase and thus is not degraded following stimulation of the NFkB pathway. This chain is IkB-like protein (A238L), found in Ornithodoros (relapsing fever ticks).